The chain runs to 464 residues: Cysteine--tRNA ligase 1 (464 aa).

Cys28 is a binding site for Zn(2+). The 'HIGH' region motif lies at 30–40 (VTIYDLCHIGH). Residues Cys209, His234, and Glu238 each contribute to the Zn(2+) site. Positions 266 to 270 (KMSKS) match the 'KMSKS' region motif. Position 269 (Lys269) interacts with ATP.

The protein belongs to the class-I aminoacyl-tRNA synthetase family. Monomer. Zn(2+) serves as cofactor.

It is found in the cytoplasm. The catalysed reaction is tRNA(Cys) + L-cysteine + ATP = L-cysteinyl-tRNA(Cys) + AMP + diphosphate. The chain is Cysteine--tRNA ligase 1 from Photobacterium profundum (strain SS9).